A 152-amino-acid chain; its full sequence is MKQALLVKVLDKRLGNEIPLPAYATDGSAGLDLRACLAEPVTLQPGETTLIPTGMAIHLSDPGLAAMLLPRSGLGHKHGIVLGNLVGLIDSDYQGEVMVSCWNRGNEAFTISVGERIAQMVIVPVVQVGFEIVDDFDDSSRGAGGFGSTGTK.

Residues 71–73, N84, 88–90, and M98 contribute to the substrate site; these read RSG and LID.

It belongs to the dUTPase family. Requires Mg(2+) as cofactor.

The catalysed reaction is dUTP + H2O = dUMP + diphosphate + H(+). The protein operates within pyrimidine metabolism; dUMP biosynthesis; dUMP from dCTP (dUTP route): step 2/2. Functionally, this enzyme is involved in nucleotide metabolism: it produces dUMP, the immediate precursor of thymidine nucleotides and it decreases the intracellular concentration of dUTP so that uracil cannot be incorporated into DNA. The polypeptide is Deoxyuridine 5'-triphosphate nucleotidohydrolase (Hahella chejuensis (strain KCTC 2396)).